Here is a 393-residue protein sequence, read N- to C-terminus: uncharacterized protein (393 aa).

Positions 164–183 (ASDPHPGKNSPASPTGENKE) are disordered. Polar residues predominate over residues 173-183 (SPASPTGENKE).

This is an uncharacterized protein from Treponema pallidum (strain Nichols).